We begin with the raw amino-acid sequence, 715 residues long: Palmitoyltransferase ZDHHC5 (715 aa).

Topologically, residues 1–13 are cytoplasmic; sequence MPAESGKRFKPSK. The helical transmembrane segment at 14 to 34 threads the bilayer; sequence YVPVSAAAIFLVGATTLFFAF. Residues 35–38 lie on the Extracellular side of the membrane; that stretch reads TCPG. The chain crosses the membrane as a helical span at residues 39–59; that stretch reads LSLCVSPAVPIYNAIVFLFVL. Residues 60 to 148 are Cytoplasmic-facing; the sequence is ANFSMATFMD…NCIGRRNYRY (89 aa). At Tyr-91 the chain carries Phosphotyrosine. Positions 104–154 constitute a DHHC domain; it reads KWCATCRFYRPPRCSHCSVCDNCVEEFDHHCPWVNNCIGRRNYRYFFLFLL. Cys-134 (S-palmitoyl cysteine intermediate) is an active-site residue. A helical transmembrane segment spans residues 149–169; it reads FFLFLLSLTAHIMGVFGFGLL. The Extracellular segment spans residues 170 to 191; that stretch reads YVLYHMEELSGVRTAVTMAVMC. Residues 192–212 form a helical membrane-spanning segment; the sequence is VAGLFFIPVAGLTGFHVVLVA. At 213-715 the chain is on the cytoplasmic side; that stretch reads RGRTTNEQVT…VGGTTYEISV (503 aa). Phosphoserine is present on residues Ser-247, Ser-296, and Ser-299. The disordered stretch occupies residues 289 to 648; that stretch reads GELRRSKSKG…SQKAPAGVSE (360 aa). Position 303 is a phosphothreonine (Thr-303). The residue at position 345 (Ser-345) is a Phosphoserine. Phosphothreonine is present on residues Thr-348 and Thr-350. The span at 359 to 373 shows a compositional bias: low complexity; the sequence is SSSSTSAAMPHSSSA. Phosphoserine occurs at positions 380, 398, 406, and 409. The residue at position 411 (Thr-411) is a Phosphothreonine. A phosphoserine mark is found at Ser-415, Ser-425, Ser-429, and Ser-432. Residues 422–432 show a composition bias toward low complexity; that stretch reads SSGSRSSSLKS. At Thr-436 the chain carries Phosphothreonine. The span at 442-478 shows a compositional bias: polar residues; it reads QLQSIRSEGTTSTSYKSLANQTRNGSLSYDSLLTPSD. Residues Ser-529 and Ser-554 each carry the phosphoserine modification. Arg-617 carries the omega-N-methylarginine modification. At Ser-621 the chain carries Phosphoserine. Position 659 is a phosphothreonine (Thr-659). The segment at 666 to 715 is disordered; sequence LKTAYSKSNGQPKSIGSASPGPGQQPLSSPTRGGVKKVSGVGGTTYEISV. Over residues 668–679 the composition is skewed to polar residues; that stretch reads TAYSKSNGQPKS. Over residues 681–695 the composition is skewed to low complexity; sequence GSASPGPGQQPLSSP. Residues Ser-684 and Ser-694 each carry the phosphoserine modification. Arg-697 is subject to Omega-N-methylarginine.

This sequence belongs to the DHHC palmitoyltransferase family. ERF2/ZDHHC9 subfamily. Post-translationally, phosphorylation regulates association with endocytic proteins and its subcellular localization. Phosphorylation by LYN during fatty acid uptake leads to inactivation of the activity. Autopalmitoylated. Palmitoylation of the C-terminal tail regulates stimulation-dependent plasma membrane motility.

The protein localises to the cell membrane. The catalysed reaction is L-cysteinyl-[protein] + hexadecanoyl-CoA = S-hexadecanoyl-L-cysteinyl-[protein] + CoA. In terms of biological role, palmitoyltransferase that catalyzes the addition of palmitate onto various protein substrates such as CTNND2, CD36, GSDMD, NLRP3, NOD1, NOD2, STAT3 and S1PR1 thus plays a role in various biological processes including cell adhesion, inflammation, fatty acid uptake, bacterial sensing or cardiac functions. Plays an important role in the regulation of synapse efficacy by mediating palmitoylation of delta-catenin/CTNND2, thereby increasing synaptic delivery and surface stabilization of alpha-amino-3-hydroxy-5-methyl-4-isoxazole propionic acid receptors (AMPARs). Under basal conditions, remains at the synaptic membrane through FYN-mediated phosphorylation that prevents association with endocytic proteins. Neuronal activity enhances the internalization and trafficking of DHHC5 from spines to dendritic shafts where it palmitoylates delta-catenin/CTNND2. Regulates cell adhesion at the plasma membrane by palmitoylating GOLGA7B and DSG2. Plays a role in innate immune response by mediating the palmitoylation of NOD1 and NOD2 and their proper recruitment to the bacterial entry site and phagosomes. Also participates in fatty acid uptake by palmitoylating CD36 and thereby targeting it to the plasma membrane. Upon binding of fatty acids to CD36, gets phosphorylated by LYN leading to inactivation and subsequent CD36 caveolar endocytosis. Controls oligodendrocyte development by catalyzing STAT3 palmitoylation. Acts as a regulator of inflammatory response by mediating palmitoylation of NLRP3 and GSDMD. Palmitoylates NLRP3 to promote inflammasome assembly and activation. Activates pyroptosis by catalyzing palmitoylation of gasdermin-D (GSDMD), thereby promoting membrane translocation and pore formation of GSDMD. The polypeptide is Palmitoyltransferase ZDHHC5 (ZDHHC5) (Canis lupus familiaris (Dog)).